The chain runs to 123 residues: Ribosome-binding factor A (123 aa).

The protein belongs to the RbfA family. Monomer. Binds 30S ribosomal subunits, but not 50S ribosomal subunits or 70S ribosomes.

The protein localises to the cytoplasm. In terms of biological role, one of several proteins that assist in the late maturation steps of the functional core of the 30S ribosomal subunit. Associates with free 30S ribosomal subunits (but not with 30S subunits that are part of 70S ribosomes or polysomes). Required for efficient processing of 16S rRNA. May interact with the 5'-terminal helix region of 16S rRNA. This chain is Ribosome-binding factor A, found in Dechloromonas aromatica (strain RCB).